The sequence spans 159 residues: Phosphopantetheine adenylyltransferase (159 aa).

Thr-9 is a binding site for substrate. ATP is bound by residues 9–10 and His-17; that span reads TF. Positions 41, 73, and 87 each coordinate substrate. ATP-binding positions include 88-90, Glu-98, and 123-129; these read GLR and YSFISST.

The protein belongs to the bacterial CoaD family. In terms of assembly, homohexamer. Mg(2+) serves as cofactor.

Its subcellular location is the cytoplasm. The enzyme catalyses (R)-4'-phosphopantetheine + ATP + H(+) = 3'-dephospho-CoA + diphosphate. Its pathway is cofactor biosynthesis; coenzyme A biosynthesis; CoA from (R)-pantothenate: step 4/5. In terms of biological role, reversibly transfers an adenylyl group from ATP to 4'-phosphopantetheine, yielding dephospho-CoA (dPCoA) and pyrophosphate. This is Phosphopantetheine adenylyltransferase from Pseudomonas syringae pv. tomato (strain ATCC BAA-871 / DC3000).